The following is a 149-amino-acid chain: Arginine repressor (149 aa).

It belongs to the ArgR family.

Its subcellular location is the cytoplasm. The protein operates within amino-acid biosynthesis; L-arginine biosynthesis [regulation]. In terms of biological role, regulates arginine biosynthesis genes. This Bacillus pumilus (strain SAFR-032) protein is Arginine repressor.